Reading from the N-terminus, the 143-residue chain is Cofilin/actin-depolymerizing factor homolog 2 (143 aa).

Residues 4–141 form the ADF-H domain; that stretch reads GVKVSDECVY…FEDELRTIIL (138 aa).

The protein belongs to the actin-binding proteins ADF family. Interacts with monomeric actin, does not bind to actin polymers.

The protein localises to the cytoplasm. It localises to the cytoskeleton. Its function is as follows. Not involved in actin polymerisation, instead functions to stimulate nucleotide exchange on monomeric actin and influence turnover of the small amount of cytosolic actin microfilaments. Essential for erythrocytic schizogony. The protein is Cofilin/actin-depolymerizing factor homolog 2 of Plasmodium falciparum (isolate 3D7).